The sequence spans 273 residues: MSNISLTAAENLQQIRENKPLIHNITNFVVMNYTANVLLATGASPVMAHAQNEVEEMVAFAGSLVLNIGTLSESWVSSMLMASQRANTLKTPIILDPVGSGATAFRTASAKRIIAEAKVSVIRGNASEILSLGSEQSNTRGVDTSQSVSDAAQTASLLARELDTILAITGPTDLVTDGRRVFNVDNGHPLMPYVTGTGCSATAVVGAFAAVDRDYLRAATTALAFFGLAGEMAGKAATGPGSFMIHLLDALYNMSPEQLEKGCRIKESSATRS.

Methionine 47 contacts substrate. ATP contacts are provided by arginine 123 and threonine 169. Glycine 196 contacts substrate.

This sequence belongs to the Thz kinase family. Requires Mg(2+) as cofactor.

The catalysed reaction is 5-(2-hydroxyethyl)-4-methylthiazole + ATP = 4-methyl-5-(2-phosphooxyethyl)-thiazole + ADP + H(+). It participates in cofactor biosynthesis; thiamine diphosphate biosynthesis; 4-methyl-5-(2-phosphoethyl)-thiazole from 5-(2-hydroxyethyl)-4-methylthiazole: step 1/1. Its function is as follows. Catalyzes the phosphorylation of the hydroxyl group of 4-methyl-5-beta-hydroxyethylthiazole (THZ). This chain is Hydroxyethylthiazole kinase, found in Desulfotalea psychrophila (strain LSv54 / DSM 12343).